We begin with the raw amino-acid sequence, 176 residues long: MHPMIPAEYISNIIYEGPGADSLFFASGQLRELAYSVETTAESLEDELDELDENWKGSSSDLLADAVERYLQWLSKHSSQLKHAAWVINGLANAYNDTRRKVVPPEEIAANREERRRLIASNVAGVNTPAIADLDAQYDQYRARNVAVMNAYVSWTRSALSDLPRWREPPQIYRGG.

The protein belongs to the mycobacterial PPE family. In terms of assembly, interacts with human TLR2.

It is found in the secreted. It localises to the cell wall. Its subcellular location is the cell surface. Plays a key role in regulating innate and adaptive immune responses through human Toll-like receptor 2 (TLR2). Interacts with TLR2, leading to the subsequent activation of the mitogen-activated protein kinase (MAPK) and nuclear factor kappa B (NF-kappa-B) signaling pathways. Induces macrophage activation by augmenting the expression of several cell surface molecules (CD40, CD80, CD86 and MHC class II) and pro-inflammatory cytokines (TNF-alpha, IL-6 and IL-12p40) within macrophages. Also participates in adaptive immunity by directing Th1-polarised immune responses. Stimulates specific humoral and cellular immune responses in tuberculosis (TB) patients. Induces a strong IgG(1) antibody response and an increased Th1/Th2 type immune response in mice. The polypeptide is PPE family protein PPE57 (Mycobacterium tuberculosis (strain ATCC 25618 / H37Rv)).